A 195-amino-acid chain; its full sequence is uncharacterized protein (195 aa).

This is an uncharacterized protein from Acidianus hospitalis (AFV-1).